The chain runs to 1698 residues: Cullin-7 (1698 aa).

Residues 315-357 (QASDRPRSSARSPGSIFQPQLADVSPGLPAAQAQPSFRRSRRF) form a disordered region. Serine 339 carries the post-translational modification Phosphoserine. The CPH domain maps to 360–433 (RSEFASGNTY…HWHMLEILGF (74 aa)). Residues 601 to 611 (SEDAAKVEAKE) show a composition bias toward basic and acidic residues. The interval 601 to 623 (SEDAAKVEAKEPPSQSPNTPLQR) is disordered. One can recognise a DOC domain in the interval 814–993 (PINIPFFDVF…HTRLFYMVRA (180 aa)). The interval 1345 to 1370 (GASGKEHKSEKEEEAGAAAVVDVAEG) is disordered. A Glycyl lysine isopeptide (Lys-Gly) (interchain with G-Cter in NEDD8) cross-link involves residue lysine 1576.

The protein belongs to the cullin family. Component of the 3M complex, composed of core components CUL7, CCDC8 and OBSL1. Component of the Cul7-RING(FBXW8) complex consisting of CUL7, RBX1, SKP1 and FBXW8. Within the Cul7-RING(FBXW8) complex interacts with FBXW8 and RBX1, but not with SKP1. Interacts with CUL1 (via the C-terminal domain); the interaction seems to be mediated by FBXW8; it is likely specific to FBXW8, but not other F-box proteins. Interacts (via the CPH domain) with p53/TP53; the interaction preferentially involves tetrameric and dimeric p53/TP53; this interaction recruits p53/TP53 for ubiquitination by neddylated CUL1-RBX1. The CUL7-CUL9 heterodimer seems to interact specifically with p53/TP53. Interacts with FBXW8; interaction is mutually exclusive of binding to CUL9 or p53/TP53. Interacts with CUL9; leading to inhibited CUL9 activity. Interacts with OBSL1. Interacts (as part of the 3M complex) with HDAC4 and HDAC5; it is negatively regulated by ANKRA2. In terms of assembly, (Microbial infection) Interacts with SV40 Large T antigen; this interaction seems to inhibit CUL7. According to a report, may not be neddylated despite the conserved consensus site for neddylation at Lys-1576. Structural study of the Cul7-RING(FBXW8) reveals that both CUL7 and RBX1 are in orientations that are incompatible with neddylation. Highly expressed in fetal kidney and adult skeletal muscle. Also abundant in fetal brain, as well as in adult pancreas, kidney, placenta and heart. Detected in trophoblasts, lymphoblasts, osteoblasts, chondrocytes and skin fibroblasts.

It is found in the cytoplasm. It localises to the cytoskeleton. Its subcellular location is the microtubule organizing center. The protein localises to the centrosome. The protein resides in the perinuclear region. It is found in the golgi apparatus. The protein operates within protein modification; protein ubiquitination. Functionally, core component of the 3M and Cul7-RING(FBXW8) complexes, which mediate the ubiquitination and subsequent proteasomal degradation of target proteins. Core component of the 3M complex, a complex required to regulate microtubule dynamics and genome integrity. It is unclear how the 3M complex regulates microtubules, it could act by controlling the level of a microtubule stabilizer. The Cul7-RING(FBXW8) complex alone lacks ubiquitination activity and does not promote polyubiquitination and proteasomal degradation of p53/TP53. However it mediates recruitment of p53/TP53 for ubiquitination by neddylated CUL1-RBX1. Interaction with CUL9 is required to inhibit CUL9 activity and ubiquitination of BIRC5. The Cul7-RING(FBXW8) complex also mediates ubiquitination and consequent degradation of target proteins such as GORASP1, IRS1 and MAP4K1/HPK1. Ubiquitination of GORASP1 regulates Golgi morphogenesis and dendrite patterning in brain. Mediates ubiquitination and degradation of IRS1 in a mTOR-dependent manner: the Cul7-RING(FBXW8) complex recognizes and binds IRS1 previously phosphorylated by S6 kinase (RPS6KB1 or RPS6KB2). The Cul7-RING(FBXW8) complex also mediates ubiquitination of MAP4K1/HPK1: recognizes and binds autophosphorylated MAP4K1/HPK1, leading to its degradation, thereby affecting cell proliferation and differentiation. Acts as a regulator in trophoblast cell epithelial-mesenchymal transition and placental development. While the Cul7-RING(FBXW8) and the 3M complexes are associated and involved in common processes, CUL7 and the Cul7-RING(FBXW8) complex may have additional functions. Probably plays a role in the degradation of proteins involved in endothelial proliferation and/or differentiation. In Homo sapiens (Human), this protein is Cullin-7 (CUL7).